We begin with the raw amino-acid sequence, 170 residues long: tRNA-splicing endonuclease (170 aa).

Residues tyrosine 110, histidine 116, and lysine 147 contribute to the active site.

Belongs to the tRNA-intron endonuclease family. Archaeal short subfamily. Homotetramer; although the tetramer contains four active sites, only two participate in the cleavage. Therefore, it should be considered as a dimer of dimers.

It carries out the reaction pretRNA = a 3'-half-tRNA molecule with a 5'-OH end + a 5'-half-tRNA molecule with a 2',3'-cyclic phosphate end + an intron with a 2',3'-cyclic phosphate and a 5'-hydroxyl terminus.. Endonuclease that removes tRNA introns. Cleaves pre-tRNA at the 5'- and 3'-splice sites to release the intron. The products are an intron and two tRNA half-molecules bearing 2',3' cyclic phosphate and 5'-OH termini. Recognizes a pseudosymmetric substrate in which 2 bulged loops of 3 bases are separated by a stem of 4 bp. In Pyrococcus abyssi (strain GE5 / Orsay), this protein is tRNA-splicing endonuclease.